The chain runs to 192 residues: MTKGRLEAFSDGVLAIIITIMVLELKVPEGSSWASLQPILPRFLAYIFSFIYVGIYWNNHHHLFQTVKKVNGSILWANLHLLFWLSLMPIATEWIGTSHFAQNPVATYGIGLIMSAIAYTILENVIIRCEGENSKLKEAIHSKFKEYISIIFYVLGIATSFFYPYIAIGFYYLVALIWLIPDKRIEKSLKEN.

A helical transmembrane segment spans residues 1–24 (MTKGRLEAFSDGVLAIIITIMVLE). The short motif at 5–11 (RLEAFSD) is the RxxxFSD motif element. Position 25 (Leu25) is a topological domain, cytoplasmic. The short helix H1 stretch occupies residues 26–29 (KVPE). Topologically, residues 26 to 39 (KVPEGSSWASLQPI) are extracellular. The interval 31–37 (SSWASLQ) is short helix H2. The chain crosses the membrane as a helical span at residues 40–65 (LPRFLAYIFSFIYVGIYWNNHHHLFQ). Residues 66-71 (TVKKVN) are Cytoplasmic-facing. Residues 72 to 93 (GSILWANLHLLFWLSLMPIATE) form a helical membrane-spanning segment. The Extracellular portion of the chain corresponds to 94–101 (WIGTSHFA). A helical transmembrane segment spans residues 102 to 126 (QNPVATYGIGLIMSAIAYTILENVI). At 127–133 (IRCEGEN) the chain is on the cytoplasmic side. Residues 134 to 162 (SKLKEAIHSKFKEYISIIFYVLGIATSFF) traverse the membrane as a helical segment. Residues 163-164 (YP) lie on the Extracellular side of the membrane. The chain crosses the membrane as a helical span at residues 165–180 (YIAIGFYYLVALIWLI). Residues 181-192 (PDKRIEKSLKEN) lie on the Cytoplasmic side of the membrane.

The protein belongs to the TMEM175 family. Homotetramer.

The protein resides in the membrane. The enzyme catalyses K(+)(in) = K(+)(out). Its function is as follows. Potassium channel. This chain is Potassium channel HX13_20290, found in Chryseobacterium sp. (strain P1-3).